A 123-amino-acid chain; its full sequence is Amoebiasin-2 (123 aa).

Positions 1 to 16 are cleaved as a signal peptide; sequence MKQFIFFALLCTSTYA. A BC loop motif is present at residues 45–50; sequence NPSTGY. The short motif at 71–81 is the DE loop element; the sequence is EPHPSGMVGFP. The short motif at 105 to 114 is the FG loop element; it reads PWEKGKEPLR.

It belongs to the protease inhibitor I42 family. In terms of assembly, monomer. May form homodimer. Interacts with cysteine protease CP2. Interacts with cysteine protease CP5.

Its subcellular location is the cytoplasmic vesicle. It localises to the lysosome. The protein localises to the phagosome. Functionally, cysteine protease inhibitor. Inhibits cysteine proteases CP1, CP2 and to a lesser extent CP5. The chain is Amoebiasin-2 from Entamoeba histolytica (strain ATCC 30459 / HM-1:IMSS / ABRM).